A 554-amino-acid chain; its full sequence is CTP synthase (554 aa).

The segment at 1 to 270 (MTKFVFVTGG…DRIICEELRI (270 aa)) is amidoligase domain. Serine 13 serves as a coordination point for CTP. Serine 13 is a binding site for UTP. ATP is bound by residues 14–19 (SLGKGI) and aspartate 71. Mg(2+) contacts are provided by aspartate 71 and glutamate 144. Residues 151-153 (DIE), 191-196 (KTKPTQ), and lysine 227 each bind CTP. UTP contacts are provided by residues 191–196 (KTKPTQ) and lysine 227. A Glutamine amidotransferase type-1 domain is found at 295–547 (TIGMVGKYVD…VEAALAHRQR (253 aa)). Position 356 (glycine 356) interacts with L-glutamine. Residue cysteine 383 is the Nucleophile; for glutamine hydrolysis of the active site. L-glutamine is bound by residues 384–387 (LGMQ), glutamate 407, and arginine 473. Active-site residues include histidine 520 and glutamate 522.

This sequence belongs to the CTP synthase family. As to quaternary structure, homotetramer.

It catalyses the reaction UTP + L-glutamine + ATP + H2O = CTP + L-glutamate + ADP + phosphate + 2 H(+). The enzyme catalyses L-glutamine + H2O = L-glutamate + NH4(+). The catalysed reaction is UTP + NH4(+) + ATP = CTP + ADP + phosphate + 2 H(+). It participates in pyrimidine metabolism; CTP biosynthesis via de novo pathway; CTP from UDP: step 2/2. Allosterically activated by GTP, when glutamine is the substrate; GTP has no effect on the reaction when ammonia is the substrate. The allosteric effector GTP functions by stabilizing the protein conformation that binds the tetrahedral intermediate(s) formed during glutamine hydrolysis. Inhibited by the product CTP, via allosteric rather than competitive inhibition. Catalyzes the ATP-dependent amination of UTP to CTP with either L-glutamine or ammonia as the source of nitrogen. Regulates intracellular CTP levels through interactions with the four ribonucleotide triphosphates. The protein is CTP synthase of Ralstonia nicotianae (strain ATCC BAA-1114 / GMI1000) (Ralstonia solanacearum).